The primary structure comprises 364 residues: tRNA-specific 2-thiouridylase MnmA 1 (364 aa).

ATP contacts are provided by residues 11-18 (GMSGGTDS) and Phe37. The active-site Nucleophile is the Cys96. A disulfide bond links Cys96 and Cys193. Gly120 contacts ATP. The interval 142–144 (KDQ) is interaction with tRNA. Residue Cys193 is the Cysteine persulfide intermediate of the active site. The tract at residues 309–310 (RY) is interaction with tRNA.

This sequence belongs to the MnmA/TRMU family.

It localises to the cytoplasm. It catalyses the reaction S-sulfanyl-L-cysteinyl-[protein] + uridine(34) in tRNA + AH2 + ATP = 2-thiouridine(34) in tRNA + L-cysteinyl-[protein] + A + AMP + diphosphate + H(+). Its function is as follows. Catalyzes the 2-thiolation of uridine at the wobble position (U34) of tRNA, leading to the formation of s(2)U34. This chain is tRNA-specific 2-thiouridylase MnmA 1, found in Bacteroides fragilis (strain YCH46).